The sequence spans 389 residues: Elongation factor Tu-3 (389 aa).

Residues 10–203 (KPHLNIGTMG…AVDTYVPMPE (194 aa)) enclose the tr-type G domain. Positions 19–26 (GHVDHGKT) are G1. 19–26 (GHVDHGKT) contacts GTP. Residue Thr26 coordinates Mg(2+). Residues 60-64 (GITIN) form a G2 region. The segment at 81 to 84 (DMPG) is G3. GTP-binding positions include 81–85 (DMPGH) and 136–139 (NKAD). Residues 136–139 (NKAD) form a G4 region. Residues 173–175 (SGL) form a G5 region.

Belongs to the TRAFAC class translation factor GTPase superfamily. Classic translation factor GTPase family. EF-Tu/EF-1A subfamily. As to quaternary structure, monomer.

Its subcellular location is the cytoplasm. It carries out the reaction GTP + H2O = GDP + phosphate + H(+). Its function is as follows. GTP hydrolase that promotes the GTP-dependent binding of aminoacyl-tRNA to the A-site of ribosomes during protein biosynthesis. The chain is Elongation factor Tu-3 from Streptomyces ramocissimus.